The chain runs to 431 residues: 23S rRNA (uracil(1939)-C(5))-methyltransferase RlmD (431 aa).

One can recognise a TRAM domain in the interval 8–68 (KRRVTTRQII…SKYSRGQVKR (61 aa)). Positions 81, 87, 90, and 162 each coordinate [4Fe-4S] cluster. S-adenosyl-L-methionine is bound by residues Gln-265, Phe-294, Asn-299, Glu-315, Asn-342, and Asp-363. The active-site Nucleophile is the Cys-389.

It belongs to the class I-like SAM-binding methyltransferase superfamily. RNA M5U methyltransferase family. RlmD subfamily.

The enzyme catalyses uridine(1939) in 23S rRNA + S-adenosyl-L-methionine = 5-methyluridine(1939) in 23S rRNA + S-adenosyl-L-homocysteine + H(+). Catalyzes the formation of 5-methyl-uridine at position 1939 (m5U1939) in 23S rRNA. In Enterobacter sp. (strain 638), this protein is 23S rRNA (uracil(1939)-C(5))-methyltransferase RlmD.